The primary structure comprises 265 residues: Urease accessory protein UreH (265 aa).

The protein belongs to the UreD family. As to quaternary structure, ureH, UreF and UreG form a complex that acts as a GTP-hydrolysis-dependent molecular chaperone, activating the urease apoprotein by helping to assemble the nickel containing metallocenter of UreC. The UreE protein probably delivers the nickel.

The protein resides in the cytoplasm. Its function is as follows. Required for maturation of urease via the functional incorporation of the urease nickel metallocenter. This chain is Urease accessory protein UreH, found in Helicobacter pylori (strain G27).